The following is a 223-amino-acid chain: MDTMKGTTTVGLICDDAVILATDKRASMGNLIADKEAKKLYKIDDYIAMTIAGSVGDAQAIVRALIAEARLYKMRTGKNISPRACATLLSNILHSSRMFPFLTQIIIGGYDLTDGPKLFSLDPLGGMNEEKTFTSTGSGSPIAYGVLEAEYDRDMSIEEGLKLALKALKSAMERDTYSGNGVSVAVITKEGVKLLSDEEITKLLGNDKSKTKKKSTRRRKKSK.

Positions 1 to 6 (MDTMKG) are cleaved as a propeptide — removed in mature form; by autocatalysis. Catalysis depends on T7, which acts as the Nucleophile.

It belongs to the peptidase T1B family. The 20S proteasome core is composed of 14 alpha and 14 beta subunits that assemble into four stacked heptameric rings, resulting in a barrel-shaped structure. The two inner rings, each composed of seven catalytic beta subunits, are sandwiched by two outer rings, each composed of seven alpha subunits. The catalytic chamber with the active sites is on the inside of the barrel. Has a gated structure, the ends of the cylinder being occluded by the N-termini of the alpha-subunits. Is capped at one or both ends by the proteasome regulatory ATPase, PAN.

It localises to the cytoplasm. The enzyme catalyses Cleavage of peptide bonds with very broad specificity.. The formation of the proteasomal ATPase PAN-20S proteasome complex, via the docking of the C-termini of PAN into the intersubunit pockets in the alpha-rings, triggers opening of the gate for substrate entry. Interconversion between the open-gate and close-gate conformations leads to a dynamic regulation of the 20S proteasome proteolysis activity. Functionally, component of the proteasome core, a large protease complex with broad specificity involved in protein degradation. The chain is Proteasome subunit beta from Methanocaldococcus vulcanius (strain ATCC 700851 / DSM 12094 / M7) (Methanococcus vulcanius).